The sequence spans 319 residues: Olfactory receptor 8K1 (319 aa).

The Extracellular segment spans residues 1–31 (MNHVVKHNHTAVTKVTEFILMGITDNPGLQA). N-linked (GlcNAc...) asparagine glycosylation is present at Asn-8. The chain crosses the membrane as a helical span at residues 32–52 (PLFGLFLIIYLVTVIGNLGMV). Residues 53–60 (ILTYLDSK) lie on the Cytoplasmic side of the membrane. The helical transmembrane segment at 61–81 (LHTPMYFFLRHLSITDLGYST) threads the bilayer. At 82 to 105 (VIAPKMLVNFIVHKNTISYNWYAT) the chain is on the extracellular side. A helical membrane pass occupies residues 106–126 (QLAFFEIFIISELFILSAMAY). The Cytoplasmic portion of the chain corresponds to 127-145 (DRYVAICKPLLYVIIMAEK). Residues 146–166 (VLWVLVIVPYLYSTFVSLFLT) form a helical membrane-spanning segment. Topologically, residues 167-203 (IKLFKLSFCGSNIISYFYCDCIPLMSILCSDTNELEL) are extracellular. The chain crosses the membrane as a helical span at residues 204–223 (IILIFSGCNLLFSLSIVLIS). Topologically, residues 224 to 243 (YMFILVAILRMNSRKGRYKA) are cytoplasmic. The helical transmembrane segment at 244–264 (FSTCSSHLTVVIMFYGTLLFI) threads the bilayer. Residues 265 to 277 (YLQPKSSHTLAID) are Extracellular-facing. A helical transmembrane segment spans residues 278–298 (KMASVFYTLLIPMLNPLIYSL). Residues 299-319 (RNKEVKDALKRTLTNRFKIPI) are Cytoplasmic-facing.

Belongs to the G-protein coupled receptor 1 family.

Its subcellular location is the cell membrane. Odorant receptor. The protein is Olfactory receptor 8K1 (OR8K1) of Homo sapiens (Human).